Here is a 344-residue protein sequence, read N- to C-terminus: Ubiquitin-associated domain-containing protein 2 (344 aa).

The signal sequence occupies residues 1-34 (MFTSTGSNGLYKAPLSKSLLLVPSAISILLTLLF). At 35–91 (QHYQKFFAYNLQAIKEDFQIWRLVCGRVICLDLKDTFCSSLLIYNFRIFERRYGSRK) the chain is on the extracellular side. The chain crosses the membrane as a helical span at residues 92–111 (FSSFLLGAWTLSALFDLLLV). Residues 112–123 (EAAQYVFGITIN) lie on the Cytoplasmic side of the membrane. Residues 124 to 142 (SLPSGFLGPVFALFVPFYC) form a helical membrane-spanning segment. The Extracellular segment spans residues 143–162 (SIPRVQVTQVLGYFSITNKT). N-linked (GlcNAc...) asparagine glycosylation occurs at Asn-160. Residues 163 to 183 (LVYILGLQLLTSGSYIWILAL) traverse the membrane as a helical segment. The Cytoplasmic segment spans residues 184 to 344 (SGLISGICYN…NVATNFLLQH (161 aa)). The disordered stretch occupies residues 284–307 (RHNENYQDHHPSDQDTPPPTEVSE). The segment covering 286–296 (NENYQDHHPSD) has biased composition (basic and acidic residues). The UBA domain maps to 304-344 (EVSEEQVARLMEMGFSRGDALEALRASNNDLNVATNFLLQH).

Its subcellular location is the endoplasmic reticulum membrane. In terms of biological role, restricts trafficking of FAF2 from the endoplasmic reticulum to lipid droplets. May negatively regulate the canonical Wnt signaling pathway in the lymphocytes. The polypeptide is Ubiquitin-associated domain-containing protein 2 (UBAC2) (Gallus gallus (Chicken)).